The primary structure comprises 294 residues: Release factor glutamine methyltransferase (294 aa).

S-adenosyl-L-methionine is bound by residues 131 to 135 (GTGSG), D154, and N202. 202–205 (NPPY) provides a ligand contact to substrate.

It belongs to the protein N5-glutamine methyltransferase family. PrmC subfamily.

The enzyme catalyses L-glutaminyl-[peptide chain release factor] + S-adenosyl-L-methionine = N(5)-methyl-L-glutaminyl-[peptide chain release factor] + S-adenosyl-L-homocysteine + H(+). In terms of biological role, methylates the class 1 translation termination release factors RF1/PrfA and RF2/PrfB on the glutamine residue of the universally conserved GGQ motif. The sequence is that of Release factor glutamine methyltransferase from Chlorobaculum tepidum (strain ATCC 49652 / DSM 12025 / NBRC 103806 / TLS) (Chlorobium tepidum).